The chain runs to 422 residues: L-cysteine:1D-myo-inositol 2-amino-2-deoxy-alpha-D-glucopyranoside ligase (422 aa).

Residue cysteine 43 participates in Zn(2+) binding. L-cysteinyl-5'-AMP-binding positions include 43–46 (CGIT), threonine 58, and 81–83 (NVT). A 'HIGH' region motif is present at residues 45-55 (ITPYDATHLGH). The span at 185–200 (AERGGDPDRPGKRNRL) shows a compositional bias: basic and acidic residues. A disordered region spans residues 185-221 (AERGGDPDRPGKRNRLDPMLWRGRRPGEPSWPGPRGV). Positions 186–191 (ERGGDP) match the 'ERGGDP' region motif. Tryptophan 227 provides a ligand contact to L-cysteinyl-5'-AMP. Position 231 (cysteine 231) interacts with Zn(2+). 249 to 251 (GSD) contacts L-cysteinyl-5'-AMP. Histidine 256 contacts Zn(2+). Isoleucine 288 contributes to the L-cysteinyl-5'-AMP binding site. The short motif at 294–298 (KMSKS) is the 'KMSKS' region element.

This sequence belongs to the class-I aminoacyl-tRNA synthetase family. MshC subfamily. In terms of assembly, monomer. It depends on Zn(2+) as a cofactor.

It carries out the reaction 1D-myo-inositol 2-amino-2-deoxy-alpha-D-glucopyranoside + L-cysteine + ATP = 1D-myo-inositol 2-(L-cysteinylamino)-2-deoxy-alpha-D-glucopyranoside + AMP + diphosphate + H(+). Functionally, catalyzes the ATP-dependent condensation of GlcN-Ins and L-cysteine to form L-Cys-GlcN-Ins. In Geodermatophilus obscurus (strain ATCC 25078 / DSM 43160 / JCM 3152 / CCUG 61914 / KCC A-0152 / KCTC 9177 / NBRC 13315 / NRRL B-3577 / G-20), this protein is L-cysteine:1D-myo-inositol 2-amino-2-deoxy-alpha-D-glucopyranoside ligase.